The sequence spans 185 residues: Ribosome-recycling factor (185 aa).

Belongs to the RRF family.

It localises to the cytoplasm. In terms of biological role, responsible for the release of ribosomes from messenger RNA at the termination of protein biosynthesis. May increase the efficiency of translation by recycling ribosomes from one round of translation to another. The protein is Ribosome-recycling factor of Hydrogenovibrio crunogenus (strain DSM 25203 / XCL-2) (Thiomicrospira crunogena).